Reading from the N-terminus, the 236-residue chain is Giant extracellular hemoglobin linker 2 chain (236 aa).

One can recognise an LDL-receptor class A domain in the interval 66-108 (NGCEPRHFQCGGSAMECISDLLTCDGSPDCANGADEDSDVCHI). 3 cysteine pairs are disulfide-bonded: Cys-68–Cys-82, Cys-75–Cys-95, and Cys-89–Cys-106.

Disulfide-linked dimer of identical chains. A model is proposed for the subunit structure of the Tylorrhynchus hemoglobin, consisting of 216 polypeptides chains, 192 heme-containing chains, and 24 linker chains.

Acts as a linker for the assembly of heme-containing chains in the construction of giant hemoglobin. This is Giant extracellular hemoglobin linker 2 chain from Tylorrhynchus heterochetus (Japanese palolo worm).